Consider the following 485-residue polypeptide: Adenosylhomocysteinase (485 aa).

Residues Thr-64, Asp-139, and Glu-205 each coordinate substrate. 206-208 (TTT) contributes to the NAD(+) binding site. Lys-235 and Asp-239 together coordinate substrate. Residues Asn-240, 269 to 274 (GYGDVG), Glu-292, Asn-327, 348 to 350 (IGH), and Asn-397 contribute to the NAD(+) site.

The protein belongs to the adenosylhomocysteinase family. Homotetramer. The cofactor is NAD(+).

The catalysed reaction is S-adenosyl-L-homocysteine + H2O = L-homocysteine + adenosine. Its pathway is amino-acid biosynthesis; L-homocysteine biosynthesis; L-homocysteine from S-adenosyl-L-homocysteine: step 1/1. Adenosylhomocysteine is a competitive inhibitor of S-adenosyl-L-methionine-dependent methyl transferase reactions; therefore adenosylhomocysteinase may play a key role in the control of methylations via regulation of the intracellular concentration of adenosylhomocysteine. In Catharanthus roseus (Madagascar periwinkle), this protein is Adenosylhomocysteinase (SAHH).